Reading from the N-terminus, the 227-residue chain is Ribose-5-phosphate isomerase A (227 aa).

Residues 26–29 (TGST), 82–85 (DGAD), and 95–98 (KGGG) each bind substrate. Glu104 functions as the Proton acceptor in the catalytic mechanism. Lys122 lines the substrate pocket.

This sequence belongs to the ribose 5-phosphate isomerase family. As to quaternary structure, homodimer.

It carries out the reaction aldehydo-D-ribose 5-phosphate = D-ribulose 5-phosphate. It participates in carbohydrate degradation; pentose phosphate pathway; D-ribose 5-phosphate from D-ribulose 5-phosphate (non-oxidative stage): step 1/1. Functionally, catalyzes the reversible conversion of ribose-5-phosphate to ribulose 5-phosphate. The sequence is that of Ribose-5-phosphate isomerase A from Streptococcus equi subsp. zooepidemicus (strain H70).